The primary structure comprises 667 residues: Serine/threonine-protein kinase BUR1 (667 aa).

Positions 60–378 constitute a Protein kinase domain; it reads YKEEEKLGQG…AMSAMKHPFF (319 aa). Residues 66–74 and K89 contribute to the ATP site; that span reads LGQGTFGEV. The active-site Proton acceptor is D207. A disordered region spans residues 408–667; the sequence is HEAMSQKGPS…SEQKDIADLY (260 aa). Basic and acidic residues predominate over residues 432–443; it reads KFEKKSGIKREQ. Over residues 494 to 516 the composition is skewed to polar residues; sequence NNHSGSLRNRITPSNMGTHSNPR. Residues 541 to 556 show a composition bias toward low complexity; sequence YNRGYSSSVNSRYNNR. 3 stretches are compositionally biased toward polar residues: residues 582 to 594, 602 to 611, and 622 to 632; these read DNNQ…QGHS, SKYNSTQTNI, and NEYNASKLGSQ. Basic and acidic residues predominate over residues 633-667; sequence DTKKNDYPKHSETQKQQNNEEKKIHSEQKDIADLY.

The protein belongs to the protein kinase superfamily. CMGC Ser/Thr protein kinase family. CDC2/CDKX subfamily.

The protein localises to the nucleus. The enzyme catalyses L-seryl-[protein] + ATP = O-phospho-L-seryl-[protein] + ADP + H(+). It carries out the reaction L-threonyl-[protein] + ATP = O-phospho-L-threonyl-[protein] + ADP + H(+). It catalyses the reaction [DNA-directed RNA polymerase] + ATP = phospho-[DNA-directed RNA polymerase] + ADP + H(+). Its function is as follows. Serine/threonine-protein kinase involved in transcription regulation. Phosphorylates the UBC2/RAD6 ubiquitin-conjugating enzyme (E2), leading to monoubiquitination of histone H2B and the silencing of telomeric-associated genes. Also required for histone H3 methylation. Necessary for the recovery from pheromone-induced growth arrest in the cell cycle G1 phase. The sequence is that of Serine/threonine-protein kinase BUR1 (BUR1) from Candida glabrata (strain ATCC 2001 / BCRC 20586 / JCM 3761 / NBRC 0622 / NRRL Y-65 / CBS 138) (Yeast).